Here is a 485-residue protein sequence, read N- to C-terminus: WD repeat-containing protein 13 (485 aa).

A phosphoserine mark is found at Ser70, Ser74, and Ser79. Arg114 carries the post-translational modification Asymmetric dimethylarginine; alternate. An Omega-N-methylarginine; alternate modification is found at Arg114. WD repeat units lie at residues 170–210, 215–254, 302–341, 406–446, and 451–484; these read HVDE…PTVL, GHTR…CIRE, KLTG…GKLT, HPVR…KAAV, and GHSA…RREQ.

The protein resides in the nucleus. This Pongo abelii (Sumatran orangutan) protein is WD repeat-containing protein 13 (WDR13).